We begin with the raw amino-acid sequence, 376 residues long: Growth/differentiation factor 8 (376 aa).

Positions 1–24 are cleaved as a signal peptide; it reads MMQKLQMYVYIYLFMLIAAGPVDL. A propeptide spanning residues 25–267 is cleaved from the precursor; that stretch reads NEGSEREENV…VTDTPKRSRR (243 aa). Asparagine 72 carries an N-linked (GlcNAc...) asparagine glycan. 4 cysteine pairs are disulfide-bonded: cysteine 273–cysteine 283, cysteine 282–cysteine 341, cysteine 310–cysteine 373, and cysteine 314–cysteine 375.

This sequence belongs to the TGF-beta family. Homodimer; disulfide-linked. Interacts with WFIKKN2, leading to inhibit its activity. Interacts with FSTL3. Post-translationally, synthesized as large precursor molecule that undergoes proteolytic cleavage to generate an N-terminal propeptide and a disulfide linked C-terminal dimer, which is the biologically active molecule. The circulating form consists of a latent complex of the C-terminal dimer and other proteins, including its propeptide, which maintain the C-terminal dimer in a latent, inactive state. Ligand activation requires additional cleavage of the prodomain by a tolloid-like metalloproteinase. Expressed specifically in developing and adult skeletal muscle. Weak expression in adipose tissue.

It localises to the secreted. Its function is as follows. Acts specifically as a negative regulator of skeletal muscle growth. The protein is Growth/differentiation factor 8 (Mstn) of Mus musculus (Mouse).